The chain runs to 597 residues: Elongation factor 4 (597 aa).

Positions 2–184 (NNIRNFSIIA…ALIAKVPPPK (183 aa)) constitute a tr-type G domain. Residues 14-19 (DHGKST) and 131-134 (NKID) each bind GTP.

This sequence belongs to the TRAFAC class translation factor GTPase superfamily. Classic translation factor GTPase family. LepA subfamily.

It is found in the cell inner membrane. It carries out the reaction GTP + H2O = GDP + phosphate + H(+). Functionally, required for accurate and efficient protein synthesis under certain stress conditions. May act as a fidelity factor of the translation reaction, by catalyzing a one-codon backward translocation of tRNAs on improperly translocated ribosomes. Back-translocation proceeds from a post-translocation (POST) complex to a pre-translocation (PRE) complex, thus giving elongation factor G a second chance to translocate the tRNAs correctly. Binds to ribosomes in a GTP-dependent manner. The protein is Elongation factor 4 of Herminiimonas arsenicoxydans.